The sequence spans 1486 residues: Chromosome partition protein MukB (1486 aa).

34 to 41 (GGNGAGKS) serves as a coordination point for ATP. Coiled coils occupy residues 326-418 (LEAD…QYNQ), 444-480 (LETF…QAYQ), and 509-603 (RHLA…RAPV). The interval 666–783 (PGGSEDQRLN…EVPLFGRAAR (118 aa)) is flexible hinge. 3 coiled-coil regions span residues 835–923 (EAEI…AKLE), 977–1115 (EMLS…TAKA), and 1209–1266 (VEAI…QNVS).

The protein belongs to the SMC family. MukB subfamily. As to quaternary structure, homodimerization via its hinge domain. Binds to DNA via its C-terminal region. Interacts, and probably forms a ternary complex, with MukE and MukF via its C-terminal region. The complex formation is stimulated by calcium or magnesium. Interacts with tubulin-related protein FtsZ.

The protein resides in the cytoplasm. It is found in the nucleoid. Its function is as follows. Plays a central role in chromosome condensation, segregation and cell cycle progression. Functions as a homodimer, which is essential for chromosome partition. Involved in negative DNA supercoiling in vivo, and by this means organize and compact chromosomes. May achieve or facilitate chromosome segregation by condensation DNA from both sides of a centrally located replisome during cell division. The chain is Chromosome partition protein MukB from Escherichia fergusonii (strain ATCC 35469 / DSM 13698 / CCUG 18766 / IAM 14443 / JCM 21226 / LMG 7866 / NBRC 102419 / NCTC 12128 / CDC 0568-73).